Reading from the N-terminus, the 1122-residue chain is DNA polymerase (1122 aa).

This sequence belongs to the DNA polymerase type-B family. As to quaternary structure, heterodimer with the terminal protein; this heterodimer binds to bp 9 to 18 of the genome. Forms a complex with viral pTP, DBP and hosts NFIA and POU2F1/OCT1 for initiation of replication.

It is found in the host nucleus. The catalysed reaction is DNA(n) + a 2'-deoxyribonucleoside 5'-triphosphate = DNA(n+1) + diphosphate. Its function is as follows. Eukaryotic-type DNA polymerase involved in viral genomic replication. DNA synthesis is protein primed, and acts in a strand displacement replication. Assembles in complex with viral pTP, DBP, host NFIA and host POU2F1/OCT1 on viral origin of replication. The polymerase covalently transfers dCMP onto pTP, thereby initiating complementary strand synthesis. The polypeptide is DNA polymerase (Human adenovirus B serotype 7 (HAdV-7)).